The sequence spans 189 residues: Small ribosomal subunit protein uS5 (189 aa).

Residues 22-85 (FVDKLVAINR…EAAKRELIFV (64 aa)) form the S5 DRBM domain.

It belongs to the universal ribosomal protein uS5 family. In terms of assembly, part of the 30S ribosomal subunit. Contacts proteins S4 and S8.

In terms of biological role, with S4 and S12 plays an important role in translational accuracy. Located at the back of the 30S subunit body where it stabilizes the conformation of the head with respect to the body. The chain is Small ribosomal subunit protein uS5 from Rhizobium johnstonii (strain DSM 114642 / LMG 32736 / 3841) (Rhizobium leguminosarum bv. viciae).